The chain runs to 467 residues: Ribosomal protein uS12 methylthiotransferase RimO (467 aa).

Residues 1–110 form the MTTase N-terminal domain; that stretch reads MDLHGCAKNQ…LPQLIDSMFP (110 aa). The [4Fe-4S] cluster site is built by Cys-6, Cys-42, Cys-73, Cys-153, Cys-157, and Cys-160. Positions 139-386 constitute a Radical SAM core domain; that stretch reads LNFPRSTYIK…QNAQTSITEK (248 aa). Residues 389-467 enclose the TRAM domain; sequence DSFIGKEIEV…NGFDLEAVAV (79 aa).

It belongs to the methylthiotransferase family. RimO subfamily. [4Fe-4S] cluster is required as a cofactor.

The protein localises to the cytoplasm. The enzyme catalyses L-aspartate(89)-[ribosomal protein uS12]-hydrogen + (sulfur carrier)-SH + AH2 + 2 S-adenosyl-L-methionine = 3-methylsulfanyl-L-aspartate(89)-[ribosomal protein uS12]-hydrogen + (sulfur carrier)-H + 5'-deoxyadenosine + L-methionine + A + S-adenosyl-L-homocysteine + 2 H(+). Catalyzes the methylthiolation of an aspartic acid residue of ribosomal protein uS12. This chain is Ribosomal protein uS12 methylthiotransferase RimO, found in Treponema denticola (strain ATCC 35405 / DSM 14222 / CIP 103919 / JCM 8153 / KCTC 15104).